A 314-amino-acid polypeptide reads, in one-letter code: Olfactory receptor 5P62 (314 aa).

The Extracellular segment spans residues 1–28 (MAFIYNGSQTTVTEFILLGLTDDPVLKV). N-linked (GlcNAc...) asparagine glycosylation is present at N6. A helical transmembrane segment spans residues 29–49 (ILFCIILCIYLVTVFGNLSTI). At 50–57 (LLIGVSSK) the chain is on the cytoplasmic side. The chain crosses the membrane as a helical span at residues 58–78 (LHHPMYFFLSHLASVDMGLSS). Over 79 to 102 (SVTPNMLVNFLTEKNTISYLGCGI) the chain is Extracellular. C100 and C192 are disulfide-bonded. The chain crosses the membrane as a helical span at residues 103–123 (QLSSAAFFGAVEFFLLAAMAY). Residues 124–136 (DRLVAICNPLLYS) are Cytoplasmic-facing. A helical transmembrane segment spans residues 137–157 (TKMSSQVCIQLVAGSYVGGFL). Over 158 to 199 (NASFVTHFFFSFLFCGPNRVNHFFCDLSPMMELSCSDVSISE) the chain is Extracellular. The helical transmembrane segment at 200 to 220 (IVISFSAGSFTMTTLFVIVIP) threads the bilayer. The Cytoplasmic portion of the chain corresponds to 221–240 (YFYIFITILKIRSTEGRQKA). A helical membrane pass occupies residues 241 to 261 (FSTCTSHLTAVTLYYGTIIFI). Residues 262–274 (YVMPKSTYSRDQN) lie on the Extracellular side of the membrane. A helical membrane pass occupies residues 275 to 295 (KVVSLFYMLVIPVLNPLIYSL). Residues 296–314 (RNNEIKDALKRQFYRKTLL) lie on the Cytoplasmic side of the membrane.

The protein belongs to the G-protein coupled receptor 1 family.

Its subcellular location is the cell membrane. Functionally, potential odorant receptor. This is Olfactory receptor 5P62 from Mus musculus (Mouse).